The primary structure comprises 133 residues: UPF0292 protein TK1411 (133 aa).

A Toprim domain is found at E20–L100. Residues E26, D69, and D71 each contribute to the Mg(2+) site.

Belongs to the UPF0292 family. It depends on Mg(2+) as a cofactor.

The chain is UPF0292 protein TK1411 from Thermococcus kodakarensis (strain ATCC BAA-918 / JCM 12380 / KOD1) (Pyrococcus kodakaraensis (strain KOD1)).